The chain runs to 753 residues: Cell cycle progression protein 1 (753 aa).

Residues 1–218 (MSESSSDSDS…KRHFSRGLNK (218 aa)) lie on the Cytoplasmic side of the membrane. The segment at 1-307 (MSESSSDSDS…QKKNLAAENQ (307 aa)) is interaction with MCF2L and SRC. A disordered region spans residues 57–211 (HGGEESSANN…EPSKEPSKRH (155 aa)). Polar residues-rich tracts occupy residues 62–78 (SSAN…LSSM) and 122–138 (QEVT…LNMG). The segment covering 176 to 185 (PRRRRNRKKT) has biased composition (basic residues). At serine 187 the chain carries Phosphoserine. Acidic residues predominate over residues 190–201 (ESEEPPLAEPED). A helical; Signal-anchor for type II membrane protein transmembrane segment spans residues 219-239 (CVILALVIAVSMGFGHFYGTI). Over 240–753 (QIQKQLVRKT…YIKPCYYNSF (514 aa)) the chain is Lumenal. A coiled-coil region spans residues 298–449 (QKKNLAAENQ…EQQRSDLWER (152 aa)). The span at 457–467 (QHGKQETDGRK) shows a compositional bias: basic and acidic residues. Positions 457-484 (QHGKQETDGRKRGSRGSHRAKSKSKETF) are disordered. The span at 468–478 (RGSRGSHRAKS) shows a compositional bias: basic residues. A coiled-coil region spans residues 503–529 (VRHHKEKIKQAKEAVKENLKKFSDSVK). Positions 553–563 (APKEAATEKTR) are enriched in basic and acidic residues. The tract at residues 553–606 (APKEAATEKTRTAYSYSSYSQQEAPNQNQNCRRPSAQRDGGREKPSHSEEIRKN) is disordered. Over residues 573 to 584 (QQEAPNQNQNCR) the composition is skewed to polar residues. Basic and acidic residues predominate over residues 591–605 (DGGREKPSHSEEIRK).

This sequence belongs to the CCPG1 family. In terms of assembly, interacts with MCF2L. May interact with MCF2, ARHGEF1, BCR, VAV1 and FGD1, but not with TIAM1. Interacts with GTP-bound CDC42 and SRC.

The protein localises to the cytoplasmic granule membrane. Its function is as follows. Acts as an assembly platform for Rho protein signaling complexes. Limits guanine nucleotide exchange activity of MCF2L toward RHOA, which results in an inhibition of both its transcriptional activation ability and its transforming activity. Does not inhibit activity of MCF2L toward CDC42, or activity of MCF2 toward either RHOA or CDC42. May be involved in cell cycle regulation. The chain is Cell cycle progression protein 1 (Ccpg1) from Mus musculus (Mouse).